The sequence spans 39 residues: Cytochrome b6-f complex subunit 5 (39 aa).

A helical membrane pass occupies residues leucine 5–alanine 25.

It belongs to the PetG family. The 4 large subunits of the cytochrome b6-f complex are cytochrome b6, subunit IV (17 kDa polypeptide, PetD), cytochrome f and the Rieske protein, while the 4 small subunits are PetG, PetL, PetM and PetN. The complex functions as a dimer.

Its subcellular location is the cellular thylakoid membrane. Its function is as follows. Component of the cytochrome b6-f complex, which mediates electron transfer between photosystem II (PSII) and photosystem I (PSI), cyclic electron flow around PSI, and state transitions. PetG is required for either the stability or assembly of the cytochrome b6-f complex. This is Cytochrome b6-f complex subunit 5 from Prochlorococcus marinus (strain MIT 9515).